Reading from the N-terminus, the 942-residue chain is Isoleucine--tRNA ligase (942 aa).

The 'HIGH' region signature appears at 58-68 (PYANGDIHLGH). E567 lines the L-isoleucyl-5'-AMP pocket. The short motif at 608-612 (KMSKS) is the 'KMSKS' region element. K611 is an ATP binding site. The Zn(2+) site is built by C905, C908, C925, and C928.

Belongs to the class-I aminoacyl-tRNA synthetase family. IleS type 1 subfamily. In terms of assembly, monomer. Requires Zn(2+) as cofactor.

It localises to the cytoplasm. It catalyses the reaction tRNA(Ile) + L-isoleucine + ATP = L-isoleucyl-tRNA(Ile) + AMP + diphosphate. Its function is as follows. Catalyzes the attachment of isoleucine to tRNA(Ile). As IleRS can inadvertently accommodate and process structurally similar amino acids such as valine, to avoid such errors it has two additional distinct tRNA(Ile)-dependent editing activities. One activity is designated as 'pretransfer' editing and involves the hydrolysis of activated Val-AMP. The other activity is designated 'posttransfer' editing and involves deacylation of mischarged Val-tRNA(Ile). The chain is Isoleucine--tRNA ligase from Pseudoalteromonas translucida (strain TAC 125).